A 185-amino-acid chain; its full sequence is Ribosome-recycling factor (185 aa).

It belongs to the RRF family.

The protein resides in the cytoplasm. Functionally, responsible for the release of ribosomes from messenger RNA at the termination of protein biosynthesis. May increase the efficiency of translation by recycling ribosomes from one round of translation to another. The sequence is that of Ribosome-recycling factor from Buchnera aphidicola subsp. Schizaphis graminum (strain Sg).